The sequence spans 241 residues: Terpene cyclase olcD (241 aa).

7 consecutive transmembrane segments (helical) span residues leucine 19 to isoleucine 39, tryptophan 49 to proline 71, isoleucine 76 to alanine 95, tyrosine 108 to isoleucine 128, phenylalanine 137 to valine 157, serine 166 to phenylalanine 186, and leucine 202 to tryptophan 222.

The protein belongs to the paxB family.

The protein resides in the membrane. It functions in the pathway secondary metabolite biosynthesis; terpenoid biosynthesis. Functionally, terpene cyclase; part of the gene cluster that mediates the biosynthesis of 15-deoxyoxalicine B. The first step of the pathway is the synthesis of nicotinyl-CoA from nicotinic acid by the nicotinic acid-CoA ligase olcI. Nicotinyl-CoA is then a substrate of polyketide synthase olcA to produce 4-hydroxy-6-(3-pyridinyl)-2H-pyran-2-one (HPPO) which is further prenylated by the polyprenyl transferase olcH to yield geranylgeranyl-HPPO. Geranylgeranyl pyrophosphate is provided by the cluster-specific geranylgeranyl pyrophosphate synthase olcC. The FAD-dependent monooxygenase olcE catalyzes the epoxidation of geranylgeranyl-HPPO and the terpene cyclase olcD catalyzes the cyclization of the terpenoid component, resulting in the formation of the tricyclic terpene moiety seen in predecaturin E. The cytochrome P450 monooxygenase then catalyzes the allylic oxidation of predecaturin E, which is followed by spirocylization with concomitant loss of one molecule of water to form decaturin E. Decaturin E is the substrate of the cytochrome P450 monooxygenase olcJ which hydroxylates it at the C-29 position to form decaturin F. The short-chain dehydrogenase/reductase olcF may catalyze the oxidation of decaturin F to generate the 29-hydroxyl-27-one intermediate, and subsequent hemiacetal formation probably leads to the formation of decaturin C. The dioxygenase olcK may be a peroxisomal enzyme that catalyzes the hydroxylation of decaturin C into decaturin A once decaturin C is shuttled into the peroxisome by the MFS transporter olcL. Finally the cytochrome P450 monooxygenase olcB catalyzes the oxidative rearrangement to yield 15-deoxyoxalicine B. In the absence of olcJ, decaturin E may be shunted to a pathway in which it is oxidized to a ketone, possibly by olcF, to form decaturin D, which undergoes further allylic oxidation to yield decaturin G. Moreover, in the absence of oclK or oclL, oclB can convert decaturin C into 15-deoxyoxalicine A. This Penicillium canescens protein is Terpene cyclase olcD.